Here is a 205-residue protein sequence, read N- to C-terminus: Metalloproteinase inhibitor 1 (205 aa).

Residues 1–24 (MMAPFASLASGILLLLSLIASSKA) form the signal peptide. A Zn(2+)-binding site is contributed by cysteine 25. The interval 25–28 (CSCA) is involved in metalloproteinase-binding. Intrachain disulfides connect cysteine 25-cysteine 94, cysteine 27-cysteine 123, cysteine 37-cysteine 148, cysteine 151-cysteine 197, cysteine 156-cysteine 161, and cysteine 169-cysteine 189. Positions 25-148 (CSCAPPHPQT…AFSKTYSAGC (124 aa)) constitute an NTR domain. N-linked (GlcNAc...) asparagine glycosylation is present at asparagine 54. The involved in metalloproteinase-binding stretch occupies residues 91-92 (ES). The N-linked (GlcNAc...) asparagine glycan is linked to asparagine 102. Serine 179 bears the Phosphoserine mark.

It belongs to the protease inhibitor I35 (TIMP) family. Interacts with MMP1, MMP3, MMP10 and MMP13, but has only very low affinity for MMP14. Interacts with CD63; identified in a complex with CD63 and ITGB1. Post-translationally, the activity of TIMP1 is dependent on the presence of disulfide bonds. In terms of processing, N-glycosylated. As to expression, found in fetal and adult tissues. Highest levels are found in bone. Also found in lung, ovary and uterus.

The protein resides in the secreted. Its function is as follows. Metalloproteinase inhibitor that functions by forming one to one complexes with target metalloproteinases, such as collagenases, and irreversibly inactivates them by binding to their catalytic zinc cofactor. Acts on MMP1, MMP2, MMP3, MMP7, MMP8, MMP9, MMP10, MMP11, MMP12, MMP13 and MMP16. Does not act on MMP14. Also functions as a growth factor that regulates cell differentiation, migration and cell death and activates cellular signaling cascades via CD63 and ITGB1. Plays a role in integrin signaling. The chain is Metalloproteinase inhibitor 1 (Timp1) from Mus musculus (Mouse).